A 49-amino-acid chain; its full sequence is Large ribosomal subunit protein bL33 (49 aa).

The protein belongs to the bacterial ribosomal protein bL33 family.

The polypeptide is Large ribosomal subunit protein bL33 (Clostridium perfringens (strain ATCC 13124 / DSM 756 / JCM 1290 / NCIMB 6125 / NCTC 8237 / Type A)).